The primary structure comprises 475 residues: Aspartyl/glutamyl-tRNA(Asn/Gln) amidotransferase subunit B (475 aa).

It belongs to the GatB/GatE family. GatB subfamily. As to quaternary structure, heterotrimer of A, B and C subunits.

It catalyses the reaction L-glutamyl-tRNA(Gln) + L-glutamine + ATP + H2O = L-glutaminyl-tRNA(Gln) + L-glutamate + ADP + phosphate + H(+). The catalysed reaction is L-aspartyl-tRNA(Asn) + L-glutamine + ATP + H2O = L-asparaginyl-tRNA(Asn) + L-glutamate + ADP + phosphate + 2 H(+). In terms of biological role, allows the formation of correctly charged Asn-tRNA(Asn) or Gln-tRNA(Gln) through the transamidation of misacylated Asp-tRNA(Asn) or Glu-tRNA(Gln) in organisms which lack either or both of asparaginyl-tRNA or glutaminyl-tRNA synthetases. The reaction takes place in the presence of glutamine and ATP through an activated phospho-Asp-tRNA(Asn) or phospho-Glu-tRNA(Gln). The protein is Aspartyl/glutamyl-tRNA(Asn/Gln) amidotransferase subunit B of Thermoanaerobacter sp. (strain X514).